The chain runs to 46 residues: Protein PsbN (46 aa).

Residues 10-30 (VAIAVLAALLGLTGFGVYTAF) form a helical membrane-spanning segment.

This sequence belongs to the PsbN family.

Its subcellular location is the cellular thylakoid membrane. Its function is as follows. May play a role in photosystem I and II biogenesis. This is Protein PsbN from Synechococcus sp. (strain WH7803).